A 347-amino-acid polypeptide reads, in one-letter code: Phosphoribosylformylglycinamidine cyclo-ligase (347 aa).

It belongs to the AIR synthase family.

The protein localises to the cytoplasm. It catalyses the reaction 2-formamido-N(1)-(5-O-phospho-beta-D-ribosyl)acetamidine + ATP = 5-amino-1-(5-phospho-beta-D-ribosyl)imidazole + ADP + phosphate + H(+). Its pathway is purine metabolism; IMP biosynthesis via de novo pathway; 5-amino-1-(5-phospho-D-ribosyl)imidazole from N(2)-formyl-N(1)-(5-phospho-D-ribosyl)glycinamide: step 2/2. The sequence is that of Phosphoribosylformylglycinamidine cyclo-ligase from Hydrogenovibrio crunogenus (strain DSM 25203 / XCL-2) (Thiomicrospira crunogena).